We begin with the raw amino-acid sequence, 72 residues long: Translation initiation factor IF-1 (72 aa).

Positions Met-1 to Lys-72 constitute an S1-like domain.

Belongs to the IF-1 family. As to quaternary structure, component of the 30S ribosomal translation pre-initiation complex which assembles on the 30S ribosome in the order IF-2 and IF-3, IF-1 and N-formylmethionyl-tRNA(fMet); mRNA recruitment can occur at any time during PIC assembly.

The protein localises to the cytoplasm. In terms of biological role, one of the essential components for the initiation of protein synthesis. Stabilizes the binding of IF-2 and IF-3 on the 30S subunit to which N-formylmethionyl-tRNA(fMet) subsequently binds. Helps modulate mRNA selection, yielding the 30S pre-initiation complex (PIC). Upon addition of the 50S ribosomal subunit IF-1, IF-2 and IF-3 are released leaving the mature 70S translation initiation complex. The chain is Translation initiation factor IF-1 from Parvibaculum lavamentivorans (strain DS-1 / DSM 13023 / NCIMB 13966).